The chain runs to 394 residues: Acetate kinase (394 aa).

Mg(2+) is bound at residue asparagine 10. Lysine 17 contacts ATP. Arginine 87 is a substrate binding site. Aspartate 144 (proton donor/acceptor) is an active-site residue. Residues 204-208, 279-281, and 327-331 contribute to the ATP site; these read HLGNG, DMR, and GIGEN. Residue glutamate 381 coordinates Mg(2+).

Belongs to the acetokinase family. As to quaternary structure, homodimer. Requires Mg(2+) as cofactor. It depends on Mn(2+) as a cofactor.

It is found in the cytoplasm. The enzyme catalyses acetate + ATP = acetyl phosphate + ADP. Its pathway is metabolic intermediate biosynthesis; acetyl-CoA biosynthesis; acetyl-CoA from acetate: step 1/2. In terms of biological role, catalyzes the formation of acetyl phosphate from acetate and ATP. Can also catalyze the reverse reaction. This Pseudomonas aeruginosa (strain LESB58) protein is Acetate kinase.